Reading from the N-terminus, the 127-residue chain is Flagellar hook-basal body complex protein FliE (127 aa).

Belongs to the FliE family.

The protein resides in the bacterial flagellum basal body. This Leptospira interrogans serogroup Icterohaemorrhagiae serovar copenhageni (strain Fiocruz L1-130) protein is Flagellar hook-basal body complex protein FliE.